Here is a 259-residue protein sequence, read N- to C-terminus: Ribonuclease HII (259 aa).

In terms of domain architecture, RNase H type-2 spans 70-258; the sequence is TLIAGIDEVG…VKSLVLGKKE (189 aa). Aspartate 76, glutamate 77, and aspartate 168 together coordinate a divalent metal cation.

Belongs to the RNase HII family. It depends on Mn(2+) as a cofactor. The cofactor is Mg(2+).

Its subcellular location is the cytoplasm. It carries out the reaction Endonucleolytic cleavage to 5'-phosphomonoester.. In terms of biological role, endonuclease that specifically degrades the RNA of RNA-DNA hybrids. This chain is Ribonuclease HII, found in Streptococcus pneumoniae (strain Taiwan19F-14).